The primary structure comprises 118 residues: Ribosomal silencing factor RsfS (118 aa).

Belongs to the Iojap/RsfS family. In terms of assembly, interacts with ribosomal protein uL14 (rplN).

The protein resides in the cytoplasm. Its function is as follows. Functions as a ribosomal silencing factor. Interacts with ribosomal protein uL14 (rplN), blocking formation of intersubunit bridge B8. Prevents association of the 30S and 50S ribosomal subunits and the formation of functional ribosomes, thus repressing translation. The protein is Ribosomal silencing factor RsfS of Bacillus subtilis (strain 168).